Reading from the N-terminus, the 332-residue chain is Nucleotide-binding protein RC1_2868 (332 aa).

Residues 1–27 (MTGQPLTMETAAGADAGTGAATHPADG) are disordered. Over residues 10-22 (TAAGADAGTGAAT) the composition is skewed to low complexity. 36 to 43 (GMSGGGLS) contacts ATP. 82-85 (DSRT) provides a ligand contact to GTP. 2 stretches are compositionally biased toward basic and acidic residues: residues 302–312 (GHRDLDRRHPA) and 322–332 (VASRETPEEHR). Residues 302–332 (GHRDLDRRHPAPEPAPPWREVASRETPEEHR) are disordered.

This sequence belongs to the RapZ-like family.

Its function is as follows. Displays ATPase and GTPase activities. In Rhodospirillum centenum (strain ATCC 51521 / SW), this protein is Nucleotide-binding protein RC1_2868.